Reading from the N-terminus, the 383-residue chain is 8-amino-7-oxononanoate synthase (383 aa).

Residue Arg-22 participates in substrate binding. A pyridoxal 5'-phosphate-binding site is contributed by 109 to 110; it reads GF. Position 134 (His-134) interacts with substrate. Ser-178, His-206, and Thr-232 together coordinate pyridoxal 5'-phosphate. Lys-235 carries the post-translational modification N6-(pyridoxal phosphate)lysine. Thr-348 contributes to the substrate binding site.

Belongs to the class-II pyridoxal-phosphate-dependent aminotransferase family. BioF subfamily. As to quaternary structure, homodimer. Requires pyridoxal 5'-phosphate as cofactor.

The catalysed reaction is 6-carboxyhexanoyl-[ACP] + L-alanine + H(+) = (8S)-8-amino-7-oxononanoate + holo-[ACP] + CO2. The protein operates within cofactor biosynthesis; biotin biosynthesis. Functionally, catalyzes the decarboxylative condensation of pimeloyl-[acyl-carrier protein] and L-alanine to produce 8-amino-7-oxononanoate (AON), [acyl-carrier protein], and carbon dioxide. This Vibrio parahaemolyticus serotype O3:K6 (strain RIMD 2210633) protein is 8-amino-7-oxononanoate synthase.